Consider the following 450-residue polypeptide: Acyltransferase GLAUCE (450 aa).

Catalysis depends on proton acceptor residues histidine 171 and glutamate 394.

The protein belongs to the plant acyltransferase family. Restricted to the central cells of embryo sacs.

It is found in the cytoplasm. It localises to the nucleus. In terms of biological role, required for double fertilization of the egg cell and the central cell by two sperm cells, resulting in the formation of the embryo and the endosperm. Involved in the regulation of embryonic expression of PHE1. Essential in maternal tissues to ensure the paternal embryonic expression of several genes, including RPS5a and FAC1, both of which being essential for early embryo and endosperm development in fertilized seeds. The chain is Acyltransferase GLAUCE from Arabidopsis thaliana (Mouse-ear cress).